We begin with the raw amino-acid sequence, 142 residues long: Hemoglobin subunit alpha (142 aa).

A Globin domain is found at 2 to 142; sequence VLSATDKSNV…VSTVLTSKYR (141 aa). The residue at position 4 (Ser4) is a Phosphoserine. 2 positions are modified to N6-succinyllysine: Lys8 and Lys12. Lys17 is modified (N6-acetyllysine; alternate). An N6-succinyllysine; alternate modification is found at Lys17. Position 25 is a phosphotyrosine (Tyr25). The residue at position 36 (Ser36) is a Phosphoserine. Lys41 bears the N6-succinyllysine mark. A Phosphoserine modification is found at Ser50. His59 provides a ligand contact to O2. His88 serves as a coordination point for heme b. The residue at position 103 (Ser103) is a Phosphoserine. Residue Thr109 is modified to Phosphothreonine. Position 125 is a phosphoserine (Ser125). Phosphothreonine occurs at positions 135 and 138. Position 139 is a phosphoserine (Ser139).

Belongs to the globin family. As to quaternary structure, heterotetramer of two alpha chains and two beta chains. As to expression, red blood cells.

Involved in oxygen transport from the lung to the various peripheral tissues. Functionally, hemopressin acts as an antagonist peptide of the cannabinoid receptor CNR1. Hemopressin-binding efficiently blocks cannabinoid receptor CNR1 and subsequent signaling. The polypeptide is Hemoglobin subunit alpha (HBA) (Alces alces alces (European moose)).